A 389-amino-acid polypeptide reads, in one-letter code: Succinate--CoA ligase [ADP-forming] subunit beta (389 aa).

Residues Arg9–Lys236 form the ATP-grasp domain. ATP contacts are provided by residues Lys45, Gly52 to Gly54, Ala94, and Glu99. Residues Asn191 and Asp205 each coordinate Mg(2+). Substrate-binding positions include Asn256 and Gly318–Thr320.

The protein belongs to the succinate/malate CoA ligase beta subunit family. In terms of assembly, heterotetramer of two alpha and two beta subunits. Mg(2+) is required as a cofactor.

It catalyses the reaction succinate + ATP + CoA = succinyl-CoA + ADP + phosphate. The enzyme catalyses GTP + succinate + CoA = succinyl-CoA + GDP + phosphate. The protein operates within carbohydrate metabolism; tricarboxylic acid cycle; succinate from succinyl-CoA (ligase route): step 1/1. Succinyl-CoA synthetase functions in the citric acid cycle (TCA), coupling the hydrolysis of succinyl-CoA to the synthesis of either ATP or GTP and thus represents the only step of substrate-level phosphorylation in the TCA. The beta subunit provides nucleotide specificity of the enzyme and binds the substrate succinate, while the binding sites for coenzyme A and phosphate are found in the alpha subunit. The protein is Succinate--CoA ligase [ADP-forming] subunit beta of Micrococcus luteus (strain ATCC 4698 / DSM 20030 / JCM 1464 / CCM 169 / CCUG 5858 / IAM 1056 / NBRC 3333 / NCIMB 9278 / NCTC 2665 / VKM Ac-2230) (Micrococcus lysodeikticus).